We begin with the raw amino-acid sequence, 421 residues long: Glucan 1,3-beta-glucosidase (421 aa).

An N-terminal signal peptide occupies residues M1 to A15. E213 serves as the catalytic Proton donor. 2 disulfide bridges follow: C296/C419 and C321/C347. Catalysis depends on E313, which acts as the Nucleophile.

Belongs to the glycosyl hydrolase 5 (cellulase A) family.

It is found in the secreted. It catalyses the reaction Successive hydrolysis of beta-D-glucose units from the non-reducing ends of (1-&gt;3)-beta-D-glucans, releasing alpha-glucose.. This Yarrowia lipolytica (strain CLIB 122 / E 150) (Yeast) protein is Glucan 1,3-beta-glucosidase (EXG1).